The primary structure comprises 77 residues: Large ribosomal subunit protein eL14 (77 aa).

The protein belongs to the eukaryotic ribosomal protein eL14 family.

This chain is Large ribosomal subunit protein eL14, found in Methanococcus vannielii (strain ATCC 35089 / DSM 1224 / JCM 13029 / OCM 148 / SB).